The chain runs to 535 residues: Beta-amylase 1, chloroplastic (535 aa).

The transit peptide at 1–36 (MALNLAQSAAAAACFATAGDARRAASVVAMPSSSSS) directs the protein to the chloroplast. Residues aspartate 115, histidine 155, and aspartate 163 each coordinate substrate. The active-site Proton donor is glutamate 247. Residues lysine 361, histidine 366, and threonine 408 each contribute to the substrate site. Glutamate 446 (proton acceptor) is an active-site residue. Residues 447 to 448 (NA) and arginine 480 each bind substrate.

Belongs to the glycosyl hydrolase 14 family.

It localises to the plastid. The protein resides in the chloroplast. It catalyses the reaction Hydrolysis of (1-&gt;4)-alpha-D-glucosidic linkages in polysaccharides so as to remove successive maltose units from the non-reducing ends of the chains.. In terms of biological role, possesses beta-amylase activity in vitro. May be involved in cold resistance by mediating the accumulation of maltose upon freezing stress, thus contributing to the protection of membranes. The polypeptide is Beta-amylase 1, chloroplastic (Oryza sativa subsp. japonica (Rice)).